The primary structure comprises 421 residues: Medium-chain specific acyl-CoA dehydrogenase, mitochondrial (421 aa).

Residues 1 to 25 (MAAGFGRCCRVLRSISRFQWRSQHT) constitute a mitochondrion transit peptide. An N6-acetyllysine; alternate modification is found at K69. Position 69 is an N6-succinyllysine; alternate (K69). FAD is bound at residue 158-167 (YCVTEPGAGS). S167 lines the octanoyl-CoA pocket. K179 bears the N6-succinyllysine mark. 191–193 (WIT) contributes to the FAD binding site. N6-acetyllysine; alternate is present on residues K212, K217, and K271. N6-succinyllysine; alternate is present on residues K212, K217, and K271. D278 is an octanoyl-CoA binding site. Position 279 is an N6-acetyllysine (K279). Residue R281 coordinates octanoyl-CoA. N6-acetyllysine is present on K301. Residues 306–308 (RKT) and 316–317 (HQ) contribute to the FAD site. Residues R349 and T351 each coordinate octanoyl-CoA. T351 carries the post-translational modification Phosphothreonine. Residue 374–378 (QILGG) participates in FAD binding. E401 lines the octanoyl-CoA pocket. Catalysis depends on E401, which acts as the Proton acceptor. 402 to 405 (GTSQ) provides a ligand contact to FAD.

Belongs to the acyl-CoA dehydrogenase family. In terms of assembly, homotetramer. Interacts with the heterodimeric electron transfer flavoprotein ETF. FAD is required as a cofactor. In terms of processing, acetylated. Could occur at proximity of the cofactor-binding sites and reduce the catalytic activity. Could be deacetylated by SIRT3.

It is found in the mitochondrion matrix. The catalysed reaction is a medium-chain 2,3-saturated fatty acyl-CoA + oxidized [electron-transfer flavoprotein] + H(+) = a medium-chain (2E)-enoyl-CoA + reduced [electron-transfer flavoprotein]. It carries out the reaction pentanoyl-CoA + oxidized [electron-transfer flavoprotein] + H(+) = (2E)-pentenoyl-CoA + reduced [electron-transfer flavoprotein]. It catalyses the reaction hexanoyl-CoA + oxidized [electron-transfer flavoprotein] + H(+) = (2E)-hexenoyl-CoA + reduced [electron-transfer flavoprotein]. The enzyme catalyses octanoyl-CoA + oxidized [electron-transfer flavoprotein] + H(+) = (2E)-octenoyl-CoA + reduced [electron-transfer flavoprotein]. The catalysed reaction is decanoyl-CoA + oxidized [electron-transfer flavoprotein] + H(+) = (2E)-decenoyl-CoA + reduced [electron-transfer flavoprotein]. It carries out the reaction dodecanoyl-CoA + oxidized [electron-transfer flavoprotein] + H(+) = (2E)-dodecenoyl-CoA + reduced [electron-transfer flavoprotein]. It catalyses the reaction tetradecanoyl-CoA + oxidized [electron-transfer flavoprotein] + H(+) = (2E)-tetradecenoyl-CoA + reduced [electron-transfer flavoprotein]. The enzyme catalyses oxidized [electron-transfer flavoprotein] + hexadecanoyl-CoA + H(+) = (2E)-hexadecenoyl-CoA + reduced [electron-transfer flavoprotein]. The protein operates within lipid metabolism; mitochondrial fatty acid beta-oxidation. Medium-chain specific acyl-CoA dehydrogenase is one of the acyl-CoA dehydrogenases that catalyze the first step of mitochondrial fatty acid beta-oxidation, an aerobic process breaking down fatty acids into acetyl-CoA and allowing the production of energy from fats. The first step of fatty acid beta-oxidation consists in the removal of one hydrogen from C-2 and C-3 of the straight-chain fatty acyl-CoA thioester, resulting in the formation of trans-2-enoyl-CoA. Electron transfer flavoprotein (ETF) is the electron acceptor that transfers electrons to the main mitochondrial respiratory chain via ETF-ubiquinone oxidoreductase (ETF dehydrogenase). Among the different mitochondrial acyl-CoA dehydrogenases, medium-chain specific acyl-CoA dehydrogenase acts specifically on acyl-CoAs with saturated 6 to 12 carbons long primary chains. This Pan troglodytes (Chimpanzee) protein is Medium-chain specific acyl-CoA dehydrogenase, mitochondrial.